Reading from the N-terminus, the 79-residue chain is Protein S100-G (79 aa).

The residue at position 2 (serine 2) is an N-acetylserine. 2 EF-hand domains span residues 13-48 (IFEK…KGPN) and 45-79 (KGPN…KISQ). Residues glutamine 26 and glutamate 31 each contribute to the Ca(2+) site. The residue at position 42 (serine 42) is a Phosphoserine. Ca(2+)-binding residues include aspartate 58, asparagine 60, aspartate 62, glutamate 64, and glutamate 69.

Belongs to the S-100 family.

This is Protein S100-G (S100G) from Homo sapiens (Human).